A 420-amino-acid chain; its full sequence is Riboflavin biosynthesis protein RibBA (420 aa).

Residues 1–202 (MTTFGTIEQA…IADLVAYRRR (202 aa)) are DHBP synthase. Residues 28 to 29 (RE), aspartate 33, 141 to 145 (RPGHT), and glutamate 165 each bind D-ribulose 5-phosphate. Position 29 (glutamate 29) interacts with Mg(2+). A Mg(2+)-binding site is contributed by histidine 144. Residues 203-420 (TEKQVELVAE…RAVVGDGIGA (218 aa)) form a GTP cyclohydrolase II region. 253-257 (RVHSE) is a GTP binding site. Zn(2+)-binding residues include cysteine 258, cysteine 269, and cysteine 271. GTP is bound by residues glutamine 274, 297-299 (EGR), and threonine 319. Aspartate 331 functions as the Proton acceptor; for GTP cyclohydrolase activity in the catalytic mechanism. Residue arginine 333 is the Nucleophile; for GTP cyclohydrolase activity of the active site. Residues threonine 354 and lysine 359 each contribute to the GTP site.

It in the N-terminal section; belongs to the DHBP synthase family. This sequence in the C-terminal section; belongs to the GTP cyclohydrolase II family. The cofactor is Mg(2+). It depends on Mn(2+) as a cofactor. Requires Zn(2+) as cofactor.

It carries out the reaction D-ribulose 5-phosphate = (2S)-2-hydroxy-3-oxobutyl phosphate + formate + H(+). It catalyses the reaction GTP + 4 H2O = 2,5-diamino-6-hydroxy-4-(5-phosphoribosylamino)-pyrimidine + formate + 2 phosphate + 3 H(+). It functions in the pathway cofactor biosynthesis; riboflavin biosynthesis; 2-hydroxy-3-oxobutyl phosphate from D-ribulose 5-phosphate: step 1/1. Its pathway is cofactor biosynthesis; riboflavin biosynthesis; 5-amino-6-(D-ribitylamino)uracil from GTP: step 1/4. Catalyzes the conversion of D-ribulose 5-phosphate to formate and 3,4-dihydroxy-2-butanone 4-phosphate. In terms of biological role, catalyzes the conversion of GTP to 2,5-diamino-6-ribosylamino-4(3H)-pyrimidinone 5'-phosphate (DARP), formate and pyrophosphate. The polypeptide is Riboflavin biosynthesis protein RibBA (Salinispora arenicola (strain CNS-205)).